We begin with the raw amino-acid sequence, 312 residues long: MSLNCKDLLGLEHLGKKDLQTILDSVGPFKSLFTRSVKKVPTLVGKTVVTLFYEPSTRTRNSFEIAAKRLSADVVNVTVNTSSIVKGESLIDTGKTLEAMKADYLIIRHSLAGAPDILARNLNASIINAGDGFHEHPTQGLLDLYTMYEKKKKIEGLKVLLVGDILHSRVAKSNIWALIKMGAEIAVVGPPTLIPSNIEDLGVKVYYDLNEAIKKVDVVNILRIQLERQQENLFPSVHEYVELYQVTEERLAMAKPGVLIMHPGPMNRGIEISSDVADSPNAVINEQVTNGIAVRMAVLCLLKPKRKNASSD.

Carbamoyl phosphate is bound by residues Arg58 and Thr59. Residue Lys86 coordinates L-aspartate. The carbamoyl phosphate site is built by Arg108, His136, and Gln139. Residues Arg169 and Arg223 each contribute to the L-aspartate site. Carbamoyl phosphate-binding residues include Gly264 and Pro265.

This sequence belongs to the aspartate/ornithine carbamoyltransferase superfamily. ATCase family. As to quaternary structure, heterododecamer (2C3:3R2) of six catalytic PyrB chains organized as two trimers (C3), and six regulatory PyrI chains organized as three dimers (R2).

It carries out the reaction carbamoyl phosphate + L-aspartate = N-carbamoyl-L-aspartate + phosphate + H(+). The protein operates within pyrimidine metabolism; UMP biosynthesis via de novo pathway; (S)-dihydroorotate from bicarbonate: step 2/3. Catalyzes the condensation of carbamoyl phosphate and aspartate to form carbamoyl aspartate and inorganic phosphate, the committed step in the de novo pyrimidine nucleotide biosynthesis pathway. The sequence is that of Aspartate carbamoyltransferase catalytic subunit from Endomicrobium trichonymphae.